A 251-amino-acid chain; its full sequence is Dehydration-responsive element-binding protein 1I (251 aa).

The disordered stretch occupies residues 1-50 (MCTSKLEEITGEWPPPALQAASTTSSSEPCRRLSPPSSKRPAGRTKFHET). A DNA-binding region (AP2/ERF) is located at residues 54 to 114 (VFRGVRRRGR…GRAAACLNFA (61 aa)). The disordered stretch occupies residues 169 to 198 (ATSEPSAASDDDAVTSSSSTTDADEEASPF).

It belongs to the AP2/ERF transcription factor family. ERF subfamily.

The protein localises to the nucleus. Its function is as follows. Transcriptional activator that binds specifically to the DNA sequence 5'-[AG]CCGAC-3'. Binding to the C-repeat/DRE element mediates high salinity- and dehydration-inducible transcription. This Oryza sativa subsp. japonica (Rice) protein is Dehydration-responsive element-binding protein 1I (DREB1I).